The primary structure comprises 323 residues: uncharacterized protein (323 aa).

A helical membrane pass occupies residues 4–24 (IIFAFIILFVFLLPMIIFYQP).

Its subcellular location is the membrane. This is an uncharacterized protein from Escherichia coli (strain K12).